A 330-amino-acid chain; its full sequence is tRNA dimethylallyltransferase (330 aa).

The span at 1 to 11 (MDYSHSDSPST) shows a compositional bias: polar residues. The tract at residues 1–21 (MDYSHSDSPSTAPAGKTPVDQ) is disordered. 29–36 (GPTGAGKS) lines the ATP pocket. 31 to 36 (TGAGKS) is a binding site for substrate. The interval 56-59 (DSMQ) is interaction with substrate tRNA.

The protein belongs to the IPP transferase family. As to quaternary structure, monomer. Requires Mg(2+) as cofactor.

It catalyses the reaction adenosine(37) in tRNA + dimethylallyl diphosphate = N(6)-dimethylallyladenosine(37) in tRNA + diphosphate. Catalyzes the transfer of a dimethylallyl group onto the adenine at position 37 in tRNAs that read codons beginning with uridine, leading to the formation of N6-(dimethylallyl)adenosine (i(6)A). This chain is tRNA dimethylallyltransferase, found in Corynebacterium urealyticum (strain ATCC 43042 / DSM 7109).